The primary structure comprises 232 residues: 7-cyano-7-deazaguanine synthase (232 aa).

7 to 17 (LSGGLDSTVVT) is a binding site for ATP. Zn(2+)-binding residues include cysteine 195, cysteine 206, cysteine 209, and cysteine 212.

The protein belongs to the QueC family. Zn(2+) is required as a cofactor.

It catalyses the reaction 7-carboxy-7-deazaguanine + NH4(+) + ATP = 7-cyano-7-deazaguanine + ADP + phosphate + H2O + H(+). It participates in purine metabolism; 7-cyano-7-deazaguanine biosynthesis. In terms of biological role, catalyzes the ATP-dependent conversion of 7-carboxy-7-deazaguanine (CDG) to 7-cyano-7-deazaguanine (preQ(0)). In Methanocaldococcus jannaschii (strain ATCC 43067 / DSM 2661 / JAL-1 / JCM 10045 / NBRC 100440) (Methanococcus jannaschii), this protein is 7-cyano-7-deazaguanine synthase.